The primary structure comprises 465 residues: Cysteine--tRNA ligase (465 aa).

Cys30 contributes to the Zn(2+) binding site. The 'HIGH' region motif lies at Ile32 to His42. Positions 214, 239, and 243 each coordinate Zn(2+). The 'KMSKS' region signature appears at Lys271 to Ser275. Lys274 is a binding site for ATP.

Belongs to the class-I aminoacyl-tRNA synthetase family. In terms of assembly, monomer. Requires Zn(2+) as cofactor.

Its subcellular location is the cytoplasm. It catalyses the reaction tRNA(Cys) + L-cysteine + ATP = L-cysteinyl-tRNA(Cys) + AMP + diphosphate. This is Cysteine--tRNA ligase from Burkholderia orbicola (strain MC0-3).